Here is a 353-residue protein sequence, read N- to C-terminus: Rhodopsin (353 aa).

At 1-36 (MNGTEGPYFYIPMVNTTGIVRSPYEYPQYYLVNPAA) the chain is on the extracellular side. N-linked (GlcNAc...) asparagine glycosylation is found at N2 and N15. Residues 37-61 (YAALGAYMFLLILLGFPINFLTLYV) traverse the membrane as a helical segment. Residues 62 to 73 (TIEHKKLRTPLN) lie on the Cytoplasmic side of the membrane. Residues 74–96 (YILLNLAVANLFMVFGGFTTTMY) traverse the membrane as a helical segment. Topologically, residues 97–110 (TSMHGYFVLGRLGC) are extracellular. C110 and C187 are disulfide-bonded. Residues 111-133 (NLEGFFATLGGEIALWSLVVLAV) traverse the membrane as a helical segment. A 'Ionic lock' involved in activated form stabilization motif is present at residues 134–136 (ERW). Residues 134 to 152 (ERWMVVCKPISNFRFGENH) lie on the Cytoplasmic side of the membrane. Residues 153 to 173 (AIMGLAFTWVMASACAVPPLV) traverse the membrane as a helical segment. The Extracellular segment spans residues 174-202 (GWSRYIPEGMQCSCGIDYYTRAEGFNNES). The N-linked (GlcNAc...) asparagine glycan is linked to N200. Residues 203–224 (FVIYMFVCHFLIPLVVVFFCYG) traverse the membrane as a helical segment. The Cytoplasmic segment spans residues 225–252 (RLLCAVKEAAAAQQESETTQRAEREVSR). The chain crosses the membrane as a helical span at residues 253-274 (MVVIMVVAFLICWCPYAGVAWY). Residues 275-286 (IFTHQGSEFGPL) are Extracellular-facing. A helical transmembrane segment spans residues 287–308 (FMTFPAFFAKSSSIYNPMIYIC). Residue K296 is modified to N6-(retinylidene)lysine. Residues 309 to 353 (MNKQFRHCMITTLCCGKNPFEEEEGASTTSKTEASSVSSSSVSPA) lie on the Cytoplasmic side of the membrane. S-palmitoyl cysteine attachment occurs at residues C322 and C323. The segment at 330-353 (EEEGASTTSKTEASSVSSSSVSPA) is disordered. Residues 334-353 (ASTTSKTEASSVSSSSVSPA) are compositionally biased toward low complexity.

It belongs to the G-protein coupled receptor 1 family. Opsin subfamily. Phosphorylated on some or all of the serine and threonine residues present in the C-terminal region. Post-translationally, contains one covalently linked retinal chromophore.

The protein resides in the membrane. The protein localises to the cell projection. It localises to the cilium. Its subcellular location is the photoreceptor outer segment. In terms of biological role, photoreceptor required for image-forming vision at low light intensity. While most salt water fish species use retinal as chromophore, most freshwater fish use 3-dehydroretinal, or a mixture of retinal and 3-dehydroretinal. Light-induced isomerization of 11-cis to all-trans retinal triggers a conformational change that activates signaling via G-proteins. Subsequent receptor phosphorylation mediates displacement of the bound G-protein alpha subunit by arrestin and terminates signaling. This chain is Rhodopsin (rho), found in Mugil cephalus (Flathead mullet).